Reading from the N-terminus, the 467-residue chain is FK506-binding protein 4 (467 aa).

2 disordered regions span residues 64 to 163 (KATG…GDDD) and 208 to 357 (GNFV…KPTS). Acidic residues-rich tracts occupy residues 71-80 (DDDDEEEDEY), 147-163 (SDEE…GDDD), and 213-254 (PEDD…DELD). Basic and acidic residues-rich tracts occupy residues 271–287 (APKL…RPAE) and 312–332 (QKVE…DKKV). One can recognise a PPIase FKBP-type domain in the interval 381-467 (GDRVGMRYIG…IFDVKLLEIK (87 aa)).

The protein belongs to the FKBP-type PPIase family. FKBP3/4 subfamily. As to quaternary structure, binds to histones H3 and H4.

The protein resides in the nucleus. The enzyme catalyses [protein]-peptidylproline (omega=180) = [protein]-peptidylproline (omega=0). With respect to regulation, inhibited by both FK506 and rapamycin. In terms of biological role, PPIase that acts as a histone chaperone. Histone proline isomerase that increases the rate of cis-trans isomerization at prolines on the histone H3 N-terminal tail. Proline isomerization influences H3 methylation thereby regulating gene expression. In Neurospora crassa (strain ATCC 24698 / 74-OR23-1A / CBS 708.71 / DSM 1257 / FGSC 987), this protein is FK506-binding protein 4 (fkr-4).